A 179-amino-acid polypeptide reads, in one-letter code: Large ribosomal subunit protein uL5 (179 aa).

The protein belongs to the universal ribosomal protein uL5 family. As to quaternary structure, part of the 50S ribosomal subunit; part of the 5S rRNA/L5/L18/L25 subcomplex. Contacts the 5S rRNA and the P site tRNA. Forms a bridge to the 30S subunit in the 70S ribosome.

This is one of the proteins that bind and probably mediate the attachment of the 5S RNA into the large ribosomal subunit, where it forms part of the central protuberance. In the 70S ribosome it contacts protein S13 of the 30S subunit (bridge B1b), connecting the 2 subunits; this bridge is implicated in subunit movement. Contacts the P site tRNA; the 5S rRNA and some of its associated proteins might help stabilize positioning of ribosome-bound tRNAs. The sequence is that of Large ribosomal subunit protein uL5 from Halorhodospira halophila (strain DSM 244 / SL1) (Ectothiorhodospira halophila (strain DSM 244 / SL1)).